The chain runs to 264 residues: Thymidylate synthase (264 aa).

Residue Arg-21 participates in dUMP binding. Residue His-51 coordinates (6R)-5,10-methylene-5,6,7,8-tetrahydrofolate. Arg-126 to Arg-127 provides a ligand contact to dUMP. Cys-146 (nucleophile) is an active-site residue. DUMP is bound by residues Arg-166 to Asp-169, Asn-177, and His-207 to Tyr-209. A (6R)-5,10-methylene-5,6,7,8-tetrahydrofolate-binding site is contributed by Asp-169. Ala-263 contributes to the (6R)-5,10-methylene-5,6,7,8-tetrahydrofolate binding site.

This sequence belongs to the thymidylate synthase family. Bacterial-type ThyA subfamily. Homodimer.

Its subcellular location is the cytoplasm. It catalyses the reaction dUMP + (6R)-5,10-methylene-5,6,7,8-tetrahydrofolate = 7,8-dihydrofolate + dTMP. It functions in the pathway pyrimidine metabolism; dTTP biosynthesis. Its function is as follows. Catalyzes the reductive methylation of 2'-deoxyuridine-5'-monophosphate (dUMP) to 2'-deoxythymidine-5'-monophosphate (dTMP) while utilizing 5,10-methylenetetrahydrofolate (mTHF) as the methyl donor and reductant in the reaction, yielding dihydrofolate (DHF) as a by-product. This enzymatic reaction provides an intracellular de novo source of dTMP, an essential precursor for DNA biosynthesis. The sequence is that of Thymidylate synthase from Nitrosomonas eutropha (strain DSM 101675 / C91 / Nm57).